We begin with the raw amino-acid sequence, 382 residues long: LIM homeobox transcription factor 1-alpha (382 aa).

LIM zinc-binding domains lie at 33-92 (SVCE…LFAV) and 92-154 (VKCG…EREL). 2 disordered regions span residues 161–208 (AASD…QQRR) and 252–285 (KLARRQQQQQQDQQNTQRLSSAQTNGGGSAGMEG). The segment at residues 195–254 (PKRPRTILTTQQRRAFKASFEVSSKPCRKVRETLAAETGLSVRVVQVWFQNQRAKMKKLA) is a DNA-binding region (homeobox). Low complexity predominate over residues 256 to 269 (RQQQQQQDQQNTQR).

In terms of tissue distribution, isoform 1 is expressed in many tissues. Not found in heart, liver, spleen and testis. Relatively highly expressed in fetal brain. Isoform LMX1A-4AB is expressed in testis.

The protein localises to the nucleus. Its function is as follows. Acts as a transcriptional activator by binding to an A/T-rich sequence, the FLAT element, in the insulin gene promoter. Required for development of the roof plate and, in turn, for specification of dorsal cell fates in the CNS and developing vertebrae. The chain is LIM homeobox transcription factor 1-alpha (LMX1A) from Homo sapiens (Human).